A 163-amino-acid polypeptide reads, in one-letter code: Staphylokinase (163 aa).

The first 27 residues, 1–27 (MLKRSLLFLTVLLLLFSFSSITNEVSA), serve as a signal peptide directing secretion.

The protein belongs to the staphylokinase family.

The protein resides in the secreted. Functionally, potent plasminogen activator that converts plasminogen into plasmin. It forms a 1:1 complex with plasmin, which in turn activates other plasminogen molecules. The chain is Staphylokinase from Staphylococcus phage S phi-C (Bacteriophage S phi-C).